We begin with the raw amino-acid sequence, 332 residues long: UDP-N-acetylenolpyruvoylglucosamine reductase (332 aa).

One can recognise an FAD-binding PCMH-type domain in the interval 15–184 (IDVSAACFLE…TYVSFRLSKR (170 aa)). Residue arginine 160 is part of the active site. The Proton donor role is filled by serine 232. The active site involves glutamate 328.

The protein belongs to the MurB family. FAD is required as a cofactor.

Its subcellular location is the cytoplasm. It carries out the reaction UDP-N-acetyl-alpha-D-muramate + NADP(+) = UDP-N-acetyl-3-O-(1-carboxyvinyl)-alpha-D-glucosamine + NADPH + H(+). Its pathway is cell wall biogenesis; peptidoglycan biosynthesis. Cell wall formation. In Bacteroides fragilis (strain YCH46), this protein is UDP-N-acetylenolpyruvoylglucosamine reductase.